Here is a 332-residue protein sequence, read N- to C-terminus: 2,3-diketo-L-gulonate reductase (332 aa).

Histidine 44 acts as the Proton donor in catalysis. Residues 168 to 174 (ITMVDMS), 224 to 225 (WK), and 304 to 306 (GHE) each bind NAD(+).

The protein belongs to the LDH2/MDH2 oxidoreductase family. DlgD subfamily. In terms of assembly, homodimer.

Its subcellular location is the cytoplasm. It carries out the reaction 3-dehydro-L-gulonate + NAD(+) = 2,3-dioxo-L-gulonate + NADH + H(+). The catalysed reaction is 3-dehydro-L-gulonate + NADP(+) = 2,3-dioxo-L-gulonate + NADPH + H(+). Catalyzes the reduction of 2,3-diketo-L-gulonate in the presence of NADH, to form 3-keto-L-gulonate. This Salmonella heidelberg (strain SL476) protein is 2,3-diketo-L-gulonate reductase.